The chain runs to 304 residues: Glycine--tRNA ligase alpha subunit (304 aa).

This sequence belongs to the class-II aminoacyl-tRNA synthetase family. Tetramer of two alpha and two beta subunits.

It localises to the cytoplasm. It carries out the reaction tRNA(Gly) + glycine + ATP = glycyl-tRNA(Gly) + AMP + diphosphate. The sequence is that of Glycine--tRNA ligase alpha subunit from Vibrio atlanticus (strain LGP32) (Vibrio splendidus (strain Mel32)).